The primary structure comprises 109 residues: Iron-sulfur cluster assembly protein CyaY (109 aa).

It belongs to the frataxin family.

Involved in iron-sulfur (Fe-S) cluster assembly. May act as a regulator of Fe-S biogenesis. The protein is Iron-sulfur cluster assembly protein CyaY of Bordetella petrii (strain ATCC BAA-461 / DSM 12804 / CCUG 43448).